A 167-amino-acid chain; its full sequence is MNLRFELQKLLNVCFLFASAYMFWQGLAIATNSASPIVVVLSGSMEPAFQRGDILFLWNRNTFNQVGDVVVYEVEGKQIPIVHRVLRQHNNHADKQFLLTKGDNNAGNDISLYANKKIYLNKSKEIVGTVKGYFPQLGYITIWISENKYAKFALLGMLGLSALLGGE.

Residues 1-9 lie on the Cytoplasmic side of the membrane; that stretch reads MNLRFELQK. Residues 10–30 traverse the membrane as a helical; Signal-anchor for type II membrane protein segment; sequence LLNVCFLFASAYMFWQGLAIA. Residues 31–167 are Lumenal-facing; sequence TNSASPIVVV…LGLSALLGGE (137 aa). Active-site charge relay system residues include Ser-44, His-83, and Asp-109. The N-linked (GlcNAc...) asparagine glycan is linked to Asn-121. The segment at 153–164 is C-terminal short (CTS) helix; sequence ALLGMLGLSALL.

It belongs to the peptidase S26B family. Component of the signal peptidase complex (SPC) composed of a catalytic subunit SEC11 and three accessory subunits SPC1, SPC2 and SPC3. The complex induces a local thinning of the ER membrane which is used to measure the length of the signal peptide (SP) h-region of protein substrates. This ensures the selectivity of the complex towards h-regions shorter than 18-20 amino acids. SPC associates with the translocon complex.

Its subcellular location is the endoplasmic reticulum membrane. The catalysed reaction is Cleavage of hydrophobic, N-terminal signal or leader sequences from secreted and periplasmic proteins.. Functionally, catalytic component of the signal peptidase complex (SPC) which catalyzes the cleavage of N-terminal signal sequences from nascent proteins as they are translocated into the lumen of the endoplasmic reticulum. Specifically cleaves N-terminal signal peptides that contain a hydrophobic alpha-helix (h-region) shorter than 18-20 amino acids. This chain is Signal peptidase complex catalytic subunit SEC11 (SEC11), found in Saccharomyces cerevisiae (strain Lalvin QA23) (Baker's yeast).